Here is a 405-residue protein sequence, read N- to C-terminus: Phosphoglycerate kinase (405 aa).

Residues aspartate 24–asparagine 26, arginine 40, histidine 63–arginine 66, arginine 122, and arginine 162 each bind substrate. ATP contacts are provided by residues lysine 213, glutamate 332, and glycine 361–serine 364.

It belongs to the phosphoglycerate kinase family. In terms of assembly, monomer.

The protein localises to the cytoplasm. It carries out the reaction (2R)-3-phosphoglycerate + ATP = (2R)-3-phospho-glyceroyl phosphate + ADP. The protein operates within carbohydrate degradation; glycolysis; pyruvate from D-glyceraldehyde 3-phosphate: step 2/5. This is Phosphoglycerate kinase from Corynebacterium diphtheriae (strain ATCC 700971 / NCTC 13129 / Biotype gravis).